Here is a 118-residue protein sequence, read N- to C-terminus: UPF0102 protein Lxx14785 (118 aa).

It belongs to the UPF0102 family.

This chain is UPF0102 protein Lxx14785, found in Leifsonia xyli subsp. xyli (strain CTCB07).